Consider the following 446-residue polypeptide: Maltoporin (446 aa).

Residues 1–25 (MMITLRKLPLAVAVAAGVMSAQAMA) form the signal peptide.

The protein belongs to the porin LamB (TC 1.B.3) family. In terms of assembly, homotrimer formed of three 18-stranded antiparallel beta-barrels, containing three independent channels.

The protein localises to the cell outer membrane. The enzyme catalyses beta-maltose(in) = beta-maltose(out). Its function is as follows. Involved in the transport of maltose and maltodextrins. The polypeptide is Maltoporin (Escherichia coli O127:H6 (strain E2348/69 / EPEC)).